The chain runs to 417 residues: Serine hydroxymethyltransferase (417 aa).

(6S)-5,6,7,8-tetrahydrofolate is bound by residues Leu112 and 116–118 (GHL). N6-(pyridoxal phosphate)lysine is present on Lys221. (6S)-5,6,7,8-tetrahydrofolate is bound at residue Glu247.

The protein belongs to the SHMT family. Homodimer. Requires pyridoxal 5'-phosphate as cofactor.

Its subcellular location is the cytoplasm. It carries out the reaction (6R)-5,10-methylene-5,6,7,8-tetrahydrofolate + glycine + H2O = (6S)-5,6,7,8-tetrahydrofolate + L-serine. It functions in the pathway one-carbon metabolism; tetrahydrofolate interconversion. It participates in amino-acid biosynthesis; glycine biosynthesis; glycine from L-serine: step 1/1. Functionally, catalyzes the reversible interconversion of serine and glycine with tetrahydrofolate (THF) serving as the one-carbon carrier. This reaction serves as the major source of one-carbon groups required for the biosynthesis of purines, thymidylate, methionine, and other important biomolecules. Also exhibits THF-independent aldolase activity toward beta-hydroxyamino acids, producing glycine and aldehydes, via a retro-aldol mechanism. In Borreliella afzelii (strain PKo) (Borrelia afzelii), this protein is Serine hydroxymethyltransferase.